The primary structure comprises 143 residues: Transcriptional regulator MraZ (143 aa).

SpoVT-AbrB domains follow at residues 6-49 (TYNH…NEAE) and 78-121 (SDET…DLKV).

The protein belongs to the MraZ family. In terms of assembly, forms oligomers.

It localises to the cytoplasm. Its subcellular location is the nucleoid. The chain is Transcriptional regulator MraZ from Spiroplasma kunkelii.